Here is a 344-residue protein sequence, read N- to C-terminus: MSSNLSNSQILNNLLEGRNLDELTSRSLMQRWLNDEISDVETGAFLSALRAKSSTGVELSSMAEELLNVCKLPVARPNLYLVDTCGTGGDGANTFNISTAVAFVAASCGVKIAKHGNKSASGKVGSADVLLNLGLDLNCSLEKVITAVSEIGITFLFAPVWHKSLIKLAPLRKTLGIRTVFNQLGPLVNPLRPNAQVLGVASEDLLEPMGRALLKMGMNRAIVVYGSGGLDEASLQGENKLVLVENGELRFSKINISNFNHENIANEKLVVSDQESNEEILKSVLNGSGQISHINVVALNSALVLWAAGIEDDLNEGFNKALFSINQGDPWKKFLLLKNYLQTN.

Residues Gly86, 89–90 (GD), Thr94, 96–99 (NIST), 114–122 (KHGNKSASG), and Ser126 each bind 5-phospho-alpha-D-ribose 1-diphosphate. Gly86 lines the anthranilate pocket. Ser98 contacts Mg(2+). Anthranilate is bound at residue Asn117. Arg172 is an anthranilate binding site. Mg(2+)-binding residues include Asp231 and Glu232.

This sequence belongs to the anthranilate phosphoribosyltransferase family. In terms of assembly, homodimer. Mg(2+) serves as cofactor.

It catalyses the reaction N-(5-phospho-beta-D-ribosyl)anthranilate + diphosphate = 5-phospho-alpha-D-ribose 1-diphosphate + anthranilate. Its pathway is amino-acid biosynthesis; L-tryptophan biosynthesis; L-tryptophan from chorismate: step 2/5. Catalyzes the transfer of the phosphoribosyl group of 5-phosphorylribose-1-pyrophosphate (PRPP) to anthranilate to yield N-(5'-phosphoribosyl)-anthranilate (PRA). In Prochlorococcus marinus (strain AS9601), this protein is Anthranilate phosphoribosyltransferase.